The chain runs to 261 residues: Cytochrome c oxidase subunit 3 (261 aa).

Over methionine 1–proline 15 the chain is Mitochondrial matrix. A helical transmembrane segment spans residues tryptophan 16–tryptophan 34. Topologically, residues phenylalanine 35–asparagine 40 are mitochondrial intermembrane. A helical membrane pass occupies residues threonine 41 to threonine 66. Topologically, residues phenylalanine 67–threonine 72 are mitochondrial matrix. Residues serine 73 to serine 105 form a helical membrane-spanning segment. Residues leucine 106–glutamate 128 are Mitochondrial intermembrane-facing. The chain crosses the membrane as a helical span at residues isoleucine 129 to methionine 152. The Mitochondrial matrix portion of the chain corresponds to glutamate 153–threonine 155. A helical transmembrane segment spans residues histidine 156 to asparagine 183. At serine 184–aspartate 190 the chain is on the mitochondrial intermembrane side. The chain crosses the membrane as a helical span at residues asparagine 191–leucine 223. Residues methionine 224 to histidine 232 are Mitochondrial matrix-facing. The helical transmembrane segment at phenylalanine 233 to isoleucine 256 threads the bilayer. Topologically, residues tyrosine 257–serine 261 are mitochondrial intermembrane.

It belongs to the cytochrome c oxidase subunit 3 family. In terms of assembly, component of the cytochrome c oxidase (complex IV, CIV), a multisubunit enzyme composed of 14 subunits. The complex is composed of a catalytic core of 3 subunits MT-CO1, MT-CO2 and MT-CO3, encoded in the mitochondrial DNA, and 11 supernumerary subunits COX4I, COX5A, COX5B, COX6A, COX6B, COX6C, COX7A, COX7B, COX7C, COX8 and NDUFA4, which are encoded in the nuclear genome. The complex exists as a monomer or a dimer and forms supercomplexes (SCs) in the inner mitochondrial membrane with NADH-ubiquinone oxidoreductase (complex I, CI) and ubiquinol-cytochrome c oxidoreductase (cytochrome b-c1 complex, complex III, CIII), resulting in different assemblies (supercomplex SCI(1)III(2)IV(1) and megacomplex MCI(2)III(2)IV(2)).

It localises to the mitochondrion inner membrane. It catalyses the reaction 4 Fe(II)-[cytochrome c] + O2 + 8 H(+)(in) = 4 Fe(III)-[cytochrome c] + 2 H2O + 4 H(+)(out). Component of the cytochrome c oxidase, the last enzyme in the mitochondrial electron transport chain which drives oxidative phosphorylation. The respiratory chain contains 3 multisubunit complexes succinate dehydrogenase (complex II, CII), ubiquinol-cytochrome c oxidoreductase (cytochrome b-c1 complex, complex III, CIII) and cytochrome c oxidase (complex IV, CIV), that cooperate to transfer electrons derived from NADH and succinate to molecular oxygen, creating an electrochemical gradient over the inner membrane that drives transmembrane transport and the ATP synthase. Cytochrome c oxidase is the component of the respiratory chain that catalyzes the reduction of oxygen to water. Electrons originating from reduced cytochrome c in the intermembrane space (IMS) are transferred via the dinuclear copper A center (CU(A)) of subunit 2 and heme A of subunit 1 to the active site in subunit 1, a binuclear center (BNC) formed by heme A3 and copper B (CU(B)). The BNC reduces molecular oxygen to 2 water molecules using 4 electrons from cytochrome c in the IMS and 4 protons from the mitochondrial matrix. The protein is Cytochrome c oxidase subunit 3 (MT-CO3) of Myxine glutinosa (Atlantic hagfish).